The following is a 412-amino-acid chain: Polyferredoxin protein MvhB (412 aa).

12 consecutive 4Fe-4S ferredoxin-type domains span residues 2-29, 30-57, 67-96, 97-127, 138-166, 168-197, 207-236, 238-266, 276-305, 314-345, 357-386, and 385-412; these read IIVNKEDCIRCGACQGTCPTAAIEVTPE, DVIYCDICGGEPKCVDICPTGALKLEDL, GRIVFNPDKCNECGDCVEVCPPQILKLDEG, KVKKVPLQGFCVMCQKCVDICPVGVIGVEGI, EGPIFIADCVGCGMCVPECPVDAITLDKV, GVIEIDEDTCIKCGVCAQTCPWNAVYISGR, KKFELDEDACIGCNTCVEACPGDFIVPRTS, LTVELPAICTACGLCEQLCPVDAIDLEVE, EGLVWDEEKCDFIGACANICPNDAIRVVTK, EKVDEEPSFAMCTRCGACTVACPKGALSLVDM, KRVQYNPALCDQCGDCIEACPYDMLKLTDE, and DEKVPLKGFCILCDQCIPACPKGALSLK. [4Fe-4S] cluster contacts are provided by Cys9, Cys12, Cys15, and Cys19. [4Fe-4S] cluster is bound by residues Cys76, Cys79, Cys82, Cys86, Cys107, Cys110, Cys113, Cys117, Cys146, Cys149, Cys152, Cys156, Cys177, Cys180, Cys183, Cys187, Cys216, Cys219, Cys222, Cys226, Cys246, Cys249, Cys252, and Cys256. Cys325, Cys328, Cys331, Cys335, Cys366, Cys369, Cys372, Cys376, Cys394, Cys397, Cys400, and Cys404 together coordinate [4Fe-4S] cluster.

[4Fe-4S] cluster serves as cofactor.

This is Polyferredoxin protein MvhB (mvhB) from Methanothermobacter thermautotrophicus (strain ATCC 29096 / DSM 1053 / JCM 10044 / NBRC 100330 / Delta H) (Methanobacterium thermoautotrophicum).